A 311-amino-acid polypeptide reads, in one-letter code: Formimidoylglutamase (311 aa).

6 residues coordinate Mn(2+): His130, Asp155, His157, Asp159, Cys242, and Asp244.

This sequence belongs to the arginase family. Mn(2+) is required as a cofactor.

The catalysed reaction is N-formimidoyl-L-glutamate + H2O = formamide + L-glutamate. The protein operates within amino-acid degradation; L-histidine degradation into L-glutamate; L-glutamate from N-formimidoyl-L-glutamate (hydrolase route): step 1/1. In terms of biological role, catalyzes the conversion of N-formimidoyl-L-glutamate to L-glutamate and formamide. The chain is Formimidoylglutamase from Staphylococcus haemolyticus (strain JCSC1435).